We begin with the raw amino-acid sequence, 503 residues long: Aspartyl/glutamyl-tRNA(Asn/Gln) amidotransferase subunit B (503 aa).

It belongs to the GatB/GatE family. GatB subfamily. Heterotrimer of A, B and C subunits.

The enzyme catalyses L-glutamyl-tRNA(Gln) + L-glutamine + ATP + H2O = L-glutaminyl-tRNA(Gln) + L-glutamate + ADP + phosphate + H(+). It carries out the reaction L-aspartyl-tRNA(Asn) + L-glutamine + ATP + H2O = L-asparaginyl-tRNA(Asn) + L-glutamate + ADP + phosphate + 2 H(+). Allows the formation of correctly charged Asn-tRNA(Asn) or Gln-tRNA(Gln) through the transamidation of misacylated Asp-tRNA(Asn) or Glu-tRNA(Gln) in organisms which lack either or both of asparaginyl-tRNA or glutaminyl-tRNA synthetases. The reaction takes place in the presence of glutamine and ATP through an activated phospho-Asp-tRNA(Asn) or phospho-Glu-tRNA(Gln). The chain is Aspartyl/glutamyl-tRNA(Asn/Gln) amidotransferase subunit B from Mycobacterium avium (strain 104).